The chain runs to 97 residues: Large ribosomal subunit protein bL28 (97 aa).

This sequence belongs to the bacterial ribosomal protein bL28 family.

The chain is Large ribosomal subunit protein bL28 from Rickettsia peacockii (strain Rustic).